A 439-amino-acid polypeptide reads, in one-letter code: MEKTDLHVNLIEKVMVGPSPPLPKTTLQLSSIDNLPGVRGSIFNALLIYNASPSPTMISADPAKPIREALAKILVYYPPFAGRLRETENGDLEVECTGEGAMFLEAMADNELSVLGDFDDSNPSFQQLLFSLPLDTNFKDLSLLVVQVTRFTCGGFVVGVSFHHGVCDGRGAAQFLKGLAEMARGEVKLSLEPIWNRELVKLDDPKYLQFFHFEFLRAPSIVEKIVQTYFIIDFETINYIKQSVMEECKEFCSSFEVASAMTWIARTRAFQIPESEYVKILFGMDMRNSFNPPLPSGYYGNSIGTACAVDNVQDLLSGSLLRAIMIIKKSKVSLNDNFKSRAVVKPSELDVNMNHENVVAFADWSRLGFDEVDFGWGNAVSVSPVQQQSALAMQNYFLFLKPSKNKPDGIKILMFLPLSKMKSFKIEMEAMMKKYVAKV.

Catalysis depends on proton acceptor residues His-164 and Asp-373.

The protein belongs to the plant acyltransferase family.

The catalysed reaction is taxa-4(20),11-dien-5alpha-ol + acetyl-CoA = taxa-4(20),11-dien-5alpha-yl acetate + CoA. The protein operates within alkaloid biosynthesis; taxol biosynthesis; 10-deacetyl-2-debenzoylbaccatin III from taxa-4(20),11-dien-5alpha-ol: step 1/3. This chain is Taxadien-5-alpha-ol O-acetyltransferase (TAT), found in Taxus cuspidata (Japanese yew).